The following is a 279-amino-acid chain: Glycerol uptake facilitator protein (279 aa).

At 1-8 (MTTAAPTP) the chain is on the cytoplasmic side. Residues 9–37 (SLFGQCLAEFLGTALLIFFGTGCVAALKV) traverse the membrane as a helical segment. At 38 to 42 (AGASF) the chain is on the periplasmic side. A helical transmembrane segment spans residues 43–63 (GLWEISIIWGVGVSMAIYLSA). The Cytoplasmic segment spans residues 64–66 (GVS). The stretch at 67–70 (GAHL) is an intramembrane region. Residues 71 to 73 (NPA) carry the NPA 1 motif. The helical intramembrane region spans 71–81 (NPAVSIALWLF). The Cytoplasmic segment spans residues 82-87 (AGFEGR). The helical transmembrane segment at 88–111 (KLPFYITAQVAGAFCAAALVYTLY) threads the bilayer. Residues 112–146 (SSLFIEFEQAQNIVRGSQDSLALASVFSTYPHPAL) lie on the Periplasmic side of the membrane. Residues 147-172 (SVGQAFLVEVVITAILMAVIMALTDD) form a helical membrane-spanning segment. Over 173 to 180 (GNGLPRGP) the chain is Cytoplasmic. A helical transmembrane segment spans residues 181–197 (LAPLLIGLLIAVIGSAM). Over 198–201 (GPLT) the chain is Periplasmic. An intramembrane segment occupies 202–205 (GFAM). The NPA 2 motif lies at 206–208 (NPA). Positions 206 to 219 (NPARDFGPKLMTYL) form an intramembrane region, helical. The Periplasmic segment spans residues 220–234 (AGWGPIAFTGGREIP). The helical transmembrane segment at 235–257 (YFLVPIFAPILGACLGAGGYRVL) threads the bilayer. Topologically, residues 258–279 (IARHLPSAAAPAEAEPEKVRAS) are cytoplasmic.

Belongs to the MIP/aquaporin (TC 1.A.8) family.

The protein localises to the cell inner membrane. It carries out the reaction glycerol(in) = glycerol(out). In terms of biological role, mediates glycerol diffusion across the cytoplasmic membrane via a pore-type mechanism. The protein is Glycerol uptake facilitator protein (glpF) of Pseudomonas aeruginosa (strain ATCC 15692 / DSM 22644 / CIP 104116 / JCM 14847 / LMG 12228 / 1C / PRS 101 / PAO1).